Consider the following 701-residue polypeptide: Polyphosphate kinase (701 aa).

Position 45 (Asn-45) interacts with ATP. The Mg(2+) site is built by Arg-373 and Arg-403. The PLD phosphodiesterase 1 domain occupies 428 to 462 (PGMKIHAKLLLITRKEGDEFVRYAHIGTGNFHERT). His-433 (phosphohistidine intermediate) is an active-site residue. ATP is bound by residues Tyr-466, Arg-562, and His-590. Residues 585 to 615 (DRFLEHPRVLVVHNDGNPQVFISSADWMERN) enclose the PLD phosphodiesterase 2 domain.

The protein belongs to the polyphosphate kinase 1 (PPK1) family. Mg(2+) serves as cofactor. Post-translationally, an intermediate of this reaction is the autophosphorylated ppk in which a phosphate is covalently linked to a histidine residue through a N-P bond.

The enzyme catalyses [phosphate](n) + ATP = [phosphate](n+1) + ADP. Catalyzes the reversible transfer of the terminal phosphate of ATP to form a long-chain polyphosphate (polyP). This chain is Polyphosphate kinase, found in Vibrio cholerae serotype O1 (strain ATCC 39315 / El Tor Inaba N16961).